A 60-amino-acid polypeptide reads, in one-letter code: Potassium channel toxin alpha-KTx 12.7 (60 aa).

Positions 1-22 (MSNMPVLIITLLLFSMYISTAA) are cleaved as a signal peptide. Intrachain disulfides connect cysteine 30-cysteine 51, cysteine 36-cysteine 56, and cysteine 40-cysteine 58.

The protein belongs to the short scorpion toxin superfamily. Potassium channel inhibitor family. Alpha-KTx 12 subfamily. In terms of tissue distribution, expressed by the venom gland.

The protein localises to the secreted. Its function is as follows. Inhibits voltage-gated potassium channels. The protein is Potassium channel toxin alpha-KTx 12.7 of Lychas mucronatus (Chinese swimming scorpion).